A 317-amino-acid polypeptide reads, in one-letter code: Flagellar hook-associated protein 3 (317 aa).

It belongs to the bacterial flagellin family.

The protein localises to the secreted. The protein resides in the bacterial flagellum. In Salmonella typhimurium (strain LT2 / SGSC1412 / ATCC 700720), this protein is Flagellar hook-associated protein 3 (flgL).